The following is a 277-amino-acid chain: Large ribosomal subunit protein uL2 (277 aa).

Disordered regions lie at residues 36–55 (PLPK…RHHG) and 213–277 (WKGI…RKKK).

This sequence belongs to the universal ribosomal protein uL2 family. In terms of assembly, part of the 50S ribosomal subunit. Forms a bridge to the 30S subunit in the 70S ribosome.

One of the primary rRNA binding proteins. Required for association of the 30S and 50S subunits to form the 70S ribosome, for tRNA binding and peptide bond formation. It has been suggested to have peptidyltransferase activity; this is somewhat controversial. Makes several contacts with the 16S rRNA in the 70S ribosome. This chain is Large ribosomal subunit protein uL2, found in Staphylococcus saprophyticus subsp. saprophyticus (strain ATCC 15305 / DSM 20229 / NCIMB 8711 / NCTC 7292 / S-41).